The sequence spans 172 residues: NADH-quinone oxidoreductase subunit B 1 (172 aa).

Residues Cys42, Cys43, Cys107, and Cys137 each coordinate [4Fe-4S] cluster.

It belongs to the complex I 20 kDa subunit family. As to quaternary structure, NDH-1 is composed of 14 different subunits. Subunits NuoB, C, D, E, F, and G constitute the peripheral sector of the complex. The cofactor is [4Fe-4S] cluster.

The protein localises to the cell inner membrane. It catalyses the reaction a quinone + NADH + 5 H(+)(in) = a quinol + NAD(+) + 4 H(+)(out). Functionally, NDH-1 shuttles electrons from NADH, via FMN and iron-sulfur (Fe-S) centers, to quinones in the respiratory chain. Couples the redox reaction to proton translocation (for every two electrons transferred, four hydrogen ions are translocated across the cytoplasmic membrane), and thus conserves the redox energy in a proton gradient. The protein is NADH-quinone oxidoreductase subunit B 1 of Anaeromyxobacter sp. (strain Fw109-5).